The following is a 338-amino-acid chain: Tetraacyldisaccharide 4'-kinase (338 aa).

61–68 (TLGGTGKT) provides a ligand contact to ATP.

Belongs to the LpxK family.

The enzyme catalyses a lipid A disaccharide + ATP = a lipid IVA + ADP + H(+). It functions in the pathway glycolipid biosynthesis; lipid IV(A) biosynthesis; lipid IV(A) from (3R)-3-hydroxytetradecanoyl-[acyl-carrier-protein] and UDP-N-acetyl-alpha-D-glucosamine: step 6/6. In terms of biological role, transfers the gamma-phosphate of ATP to the 4'-position of a tetraacyldisaccharide 1-phosphate intermediate (termed DS-1-P) to form tetraacyldisaccharide 1,4'-bis-phosphate (lipid IVA). The polypeptide is Tetraacyldisaccharide 4'-kinase (Nitrosococcus oceani (strain ATCC 19707 / BCRC 17464 / JCM 30415 / NCIMB 11848 / C-107)).